The sequence spans 206 residues: Tetrathionate response regulatory protein TtrR (206 aa).

Residues 3-117 (TIHLLDDDTA…PLQAALERAL (115 aa)) form the Response regulatory domain. At D52 the chain carries 4-aspartylphosphate. Positions 134 to 194 (QQLTPKEREL…ELIRRFEKMA (61 aa)) constitute an HTH luxR-type domain. A DNA-binding region (H-T-H motif) is located at residues 153–172 (NREIAEAMNIAVRTVEVHRA).

Post-translationally, phosphorylated by TtrS.

It localises to the cytoplasm. In terms of biological role, member of the two-component regulatory system TtrR/TtrS, which is required for synthesis of tetrathionate reductase. Positively regulates transcription of the ttrBCA operon. During mice infection, the ability to use tetrathionate as an electron acceptor is a growth advantage for S.typhimurium over the competing microbiota in the lumen of the inflamed gut. The protein is Tetrathionate response regulatory protein TtrR (ttrR) of Salmonella typhimurium (strain LT2 / SGSC1412 / ATCC 700720).